Here is a 639-residue protein sequence, read N- to C-terminus: UvrABC system protein C (639 aa).

Acidic residues predominate over residues 1–16 (MTDLPVDEPDRDDGAD). The tract at residues 1-28 (MTDLPVDEPDRDDGADQPDAGADPATPR) is disordered. The segment covering 17–27 (QPDAGADPATP) has biased composition (low complexity). A GIY-YIG domain is found at 42-120 (SSPGVYRMID…IKKLKPRYNI (79 aa)). The region spanning 230–265 (KALQHDLAKRMDEAAQALDYEQAAIFRDRIKALTNV) is the UVR domain.

It belongs to the UvrC family. As to quaternary structure, interacts with UvrB in an incision complex.

Its subcellular location is the cytoplasm. In terms of biological role, the UvrABC repair system catalyzes the recognition and processing of DNA lesions. UvrC both incises the 5' and 3' sides of the lesion. The N-terminal half is responsible for the 3' incision and the C-terminal half is responsible for the 5' incision. This chain is UvrABC system protein C, found in Rhodospirillum rubrum (strain ATCC 11170 / ATH 1.1.1 / DSM 467 / LMG 4362 / NCIMB 8255 / S1).